Consider the following 445-residue polypeptide: Ribosomal protein uS12 methylthiotransferase RimO (445 aa).

One can recognise an MTTase N-terminal domain in the interval 4 to 119; the sequence is LKFGLVSLGC…LDDAIEDFFN (116 aa). C13, C48, C82, C156, C160, and C163 together coordinate [4Fe-4S] cluster. The Radical SAM core domain maps to 142-372; the sequence is TTGEYSSYVR…MLIQQQVSKN (231 aa). Residues 375–441 form the TRAM domain; sequence AKKIGKVYKV…EYDLIGVVYN (67 aa).

The protein belongs to the methylthiotransferase family. RimO subfamily. [4Fe-4S] cluster is required as a cofactor.

Its subcellular location is the cytoplasm. The enzyme catalyses L-aspartate(89)-[ribosomal protein uS12]-hydrogen + (sulfur carrier)-SH + AH2 + 2 S-adenosyl-L-methionine = 3-methylsulfanyl-L-aspartate(89)-[ribosomal protein uS12]-hydrogen + (sulfur carrier)-H + 5'-deoxyadenosine + L-methionine + A + S-adenosyl-L-homocysteine + 2 H(+). Its function is as follows. Catalyzes the methylthiolation of an aspartic acid residue of ribosomal protein uS12. The chain is Ribosomal protein uS12 methylthiotransferase RimO from Clostridium acetobutylicum (strain ATCC 824 / DSM 792 / JCM 1419 / IAM 19013 / LMG 5710 / NBRC 13948 / NRRL B-527 / VKM B-1787 / 2291 / W).